Here is a 506-residue protein sequence, read N- to C-terminus: Histidine ammonia-lyase (506 aa).

The segment at residues 143–145 is a cross-link (5-imidazolinone (Ala-Gly)); sequence ASG. Residue serine 144 is modified to 2,3-didehydroalanine (Ser).

Belongs to the PAL/histidase family. In terms of processing, contains an active site 4-methylidene-imidazol-5-one (MIO), which is formed autocatalytically by cyclization and dehydration of residues Ala-Ser-Gly.

It is found in the cytoplasm. The enzyme catalyses L-histidine = trans-urocanate + NH4(+). It participates in amino-acid degradation; L-histidine degradation into L-glutamate; N-formimidoyl-L-glutamate from L-histidine: step 1/3. This Salmonella agona (strain SL483) protein is Histidine ammonia-lyase.